A 433-amino-acid polypeptide reads, in one-letter code: 3-phosphoshikimate 1-carboxyvinyltransferase (433 aa).

Residues Lys-15, Ser-16, and Arg-20 each coordinate 3-phosphoshikimate. Lys-15 lines the phosphoenolpyruvate pocket. Residues Gly-96 and Arg-124 each coordinate phosphoenolpyruvate. 3-phosphoshikimate-binding residues include Ser-169, Gln-171, Ser-195, Asp-318, and Lys-345. Gln-171 serves as a coordination point for phosphoenolpyruvate. Residue Asp-318 is the Proton acceptor of the active site. Residues Arg-349 and Arg-393 each coordinate phosphoenolpyruvate.

The protein belongs to the EPSP synthase family. As to quaternary structure, monomer.

The protein localises to the cytoplasm. The enzyme catalyses 3-phosphoshikimate + phosphoenolpyruvate = 5-O-(1-carboxyvinyl)-3-phosphoshikimate + phosphate. Its pathway is metabolic intermediate biosynthesis; chorismate biosynthesis; chorismate from D-erythrose 4-phosphate and phosphoenolpyruvate: step 6/7. In terms of biological role, catalyzes the transfer of the enolpyruvyl moiety of phosphoenolpyruvate (PEP) to the 5-hydroxyl of shikimate-3-phosphate (S3P) to produce enolpyruvyl shikimate-3-phosphate and inorganic phosphate. The chain is 3-phosphoshikimate 1-carboxyvinyltransferase from Pelodictyon phaeoclathratiforme (strain DSM 5477 / BU-1).